The sequence spans 521 residues: Acetyl-CoA hydrolase (521 aa).

276 to 280 (GIGNI) lines the CoA pocket. Glutamate 301 acts as the 5-glutamyl coenzyme A thioester intermediate in catalysis. CoA contacts are provided by asparagine 391 and glycine 395.

The protein belongs to the acetyl-CoA hydrolase/transferase family.

It localises to the cytoplasm. It catalyses the reaction acetyl-CoA + H2O = acetate + CoA + H(+). Presumably involved in regulating the intracellular acetyl-CoA pool for fatty acid and cholesterol synthesis and fatty acid oxidation. This Schizosaccharomyces pombe (strain 972 / ATCC 24843) (Fission yeast) protein is Acetyl-CoA hydrolase (ach1).